Consider the following 460-residue polypeptide: Glycogen synthase (460 aa).

Lys-15 is a binding site for ADP-alpha-D-glucose.

Belongs to the glycosyltransferase 1 family. Bacterial/plant glycogen synthase subfamily.

It carries out the reaction [(1-&gt;4)-alpha-D-glucosyl](n) + ADP-alpha-D-glucose = [(1-&gt;4)-alpha-D-glucosyl](n+1) + ADP + H(+). Its pathway is glycan biosynthesis; glycogen biosynthesis. Functionally, synthesizes alpha-1,4-glucan chains using ADP-glucose. The polypeptide is Glycogen synthase (Trichodesmium erythraeum (strain IMS101)).